The sequence spans 378 residues: Stimulator of interferon genes protein (378 aa).

Residues 1 to 17 lie on the Cytoplasmic side of the membrane; it reads MPHSSLHPSIPQPRGLR. A mediates interaction with ZDHHC1 and ZDHHC11 region spans residues 1–190; that stretch reads MPHSSLHPSI…IYNQFHNNTL (190 aa). A helical transmembrane segment spans residues 18–34; sequence AQKAALVLLSACLVALW. Residues 35–44 are Lumenal-facing; it reads GLGEPPDYTL. Residues 45-69 form a helical membrane-spanning segment; sequence KWLVLHLASQQMGLLIKGICSLAEE. Residues 70–91 are Cytoplasmic-facing; sequence LCHVHSRYHGSYWRAVRACLCS. C88 carries the S-palmitoyl cysteine lipid modification. Residues 92-106 traverse the membrane as a helical segment; sequence SMRCGALLLLSCYFY. Topologically, residues 107 to 116 are lumenal; the sequence is CSLPNMADLP. The helical transmembrane segment at 117-134 threads the bilayer; it reads FTWMLALLGLSQALNILL. Residues 135-378 are Cytoplasmic-facing; it reads GLQGLAPAEV…KPLPLRSDVF (244 aa). A Glycyl lysine isopeptide (Lys-Gly) (interchain with G-Cter in ubiquitin) cross-link involves residue K150. The interval 153–339 is cyclic dinucleotide-binding domain (CBD); sequence FNVAHGLAWS…LQHLRQEERE (187 aa). Residues S162 and Y167 each contribute to the 2',3'-cGAMP site. 3',3'-c-di-GMP is bound by residues S162 and Y167. A 2',3'-cUAMP-binding site is contributed by Y167. A Glycyl lysine isopeptide (Lys-Gly) (interchain with G-Cter in ubiquitin) cross-link involves residue K236. Residues R238 and T263 each contribute to the 2',3'-cGAMP site. 2',3'-cUAMP is bound by residues R238 and T263. 3',3'-c-di-GMP is bound by residues 238–241 and T263; that span reads RVYT. The C-terminal tail (CTT) stretch occupies residues 339 to 378; sequence EVTMGSTETSVMPGSSVLSQEPELLISGLEKPLPLRSDVF. Residue S354 is modified to Phosphoserine. 2 positions are modified to phosphoserine; by TBK1: S357 and S365. The pLxIS motif signature appears at 362–365; sequence LLIS.

It belongs to the STING family. Homodimer; forms a homodimer in absence of cyclic nucleotide (c-di-GMP or cGAMP); 'Lys-63'-linked ubiquitination at Lys-150 is required for homodimerization. Homotetramer; in presence of cyclic nucleotide (c-di-GMP or cGAMP), forms tetramers and higher-order oligomers through side-by-side packing. Interacts (when phosphorylated) with IRF3; following activation and phosphorylation on the pLxIS motif by TBK1, recruits IRF3. Interacts with RIGI, MAVS and SSR2. Interacts with RNF5 and TRIM56. Interacts with TBK1; when homodimer, leading to subsequent production of IFN-beta. Interacts with IFIT1 and IFIT2. Interacts with TRIM29; this interaction induces STING1 ubiquitination and subsequent degradation. Associates with the MHC-II complex. Interacts with STEEP1; interaction takes place upon cGAMP-activation and STING1 phosphorylation by MAP3K7/TAK1 and promotes STING1 translocation to COPII vesicles. Interacts with SEC24A, SEC24B and SEC24C; promoting translocation to COPII vesicles. Interacts (when ubiquitinated) with SQSTM1; leading to relocalization to autophagosomes. Interacts with SURF4. Interacts with HNRNPA2B1. Interacts with ZDHHC1; ZDHHC1 constitutively interacts with STING1 and in presence of DNA viruses activates it by promoting its cGAMP-induced oligomerization and the recruitment of downstream signaling components. Interacts with ZDHHC11; in presence of DNA viruses promotes the recruitment of IRF3 to STING1. Interacts with TOMM70. Interacts with TAB1; promoting recruitment of TAB1 to the endoplasmic reticulum membrane and subsequent activation of MAP3K7/TAK1. Interacts (via transmembrane domain) with TMEM203. Interacts with DDX41. In terms of processing, phosphorylation by TBK1 leads to activation and production of IFN-beta. Following cyclic nucleotide (c-di-GMP or cGAMP)-binding, activation and translocation from the endoplasmic reticulum, STING1 is phosphorylated by TBK1 at Ser-365 in the pLxIS motif. The phosphorylated pLxIS motif constitutes an IRF3-binding motif, leading to recruitment of the transcription factor IRF3 to induce type-I interferons and other cytokines. Phosphorylated on tyrosine residues upon MHC-II aggregation. Dephosphorylation by PPP6C leads to inactivation and decreased production of IFN-beta. Phosphorylation at Ser-357 is also required to activate IRF3. Phosphorylation at Ser-354 by MAP3K7/TAK1 facilitates its interaction with STEEP1, promoting STING1 translocation to COPII vesicles. Post-translationally, ubiquitinated. Ubiquitinated via 'Lys-63'-linked ubiquitin chains in response to double-stranded DNA treatment, leading to relocalization to autophagosomes and subsequent degradation; this process is dependent on SQSTM1. 'Lys-63'-linked ubiquitination mediated by TRIM56 at Lys-150 promotes homodimerization and recruitment of the antiviral kinase TBK1 and subsequent production of IFN-beta. 'Lys-48'-linked polyubiquitination at Lys-150 occurring after viral infection is mediated by RNF5 and leads to proteasomal degradation. 'Lys-11'-linked polyubiquitination at Lys-150 by RNF26 leads to stabilize STING1: it protects STING1 from RNF5-mediated 'Lys-48'-linked polyubiquitination. 'Lys-33'-linked and 'Lys-48'-linked deubiquitinated by USP20; leading to its stabilization and promotion of innate antiviral response. 'Lys-48'-linked deubiquitinated by USP44; leading to its stabilization and promotion of innate antiviral response. 'Lys-63'-linked deubiquitinated by USP49; leading to inhibition of the subsequent recruitment of TBK1 to the signaling complex. 'Lys-63'-linked ubiquitination mediated by RNF39 promotes the activation of the cGAS-STING pathway. Palmitoylation takes place in the Golgi apparatus and creates a platform for the recruitment of TBK1.

It is found in the endoplasmic reticulum membrane. The protein resides in the cytoplasm. It localises to the perinuclear region. The protein localises to the endoplasmic reticulum-Golgi intermediate compartment membrane. Its subcellular location is the golgi apparatus membrane. It is found in the cytoplasmic vesicle. The protein resides in the autophagosome membrane. It localises to the mitochondrion outer membrane. The protein localises to the cell membrane. It carries out the reaction H(+)(in) = H(+)(out). Functionally, facilitator of innate immune signaling that acts as a sensor of cytosolic DNA from bacteria and viruses and promotes the production of type I interferon (IFN-alpha and IFN-beta). Innate immune response is triggered in response to non-CpG double-stranded DNA from viruses and bacteria delivered to the cytoplasm. Acts by binding cyclic dinucleotides: recognizes and binds cyclic di-GMP (c-di-GMP), a second messenger produced by bacteria, cyclic UMP-AMP (2',3'-cUAMP), and cyclic GMP-AMP (cGAMP), a messenger produced by CGAS in response to DNA virus in the cytosol. Upon binding to c-di-GMP or cGAMP, STING oligomerizes, translocates from the endoplasmic reticulum and is phosphorylated by TBK1 on the pLxIS motif, leading to recruitment and subsequent activation of the transcription factor IRF3 to induce expression of type I interferon and exert a potent anti-viral state. Exhibits 2',3' phosphodiester linkage-specific ligand recognition: can bind both 2'-3' linked cGAMP (2'-3'-cGAMP) and 3'-3' linked cGAMP but is preferentially activated by 2'-3' linked cGAMP. The preference for 2'-3'-cGAMP, compared to other linkage isomers is probably due to the ligand itself, whichs adopts an organized free-ligand conformation that resembles the STING1-bound conformation and pays low energy costs in changing into the active conformation. In addition to promote the production of type I interferons, plays a direct role in autophagy. Following cGAMP-binding, STING1 buds from the endoplasmic reticulum into COPII vesicles, which then form the endoplasmic reticulum-Golgi intermediate compartment (ERGIC). The ERGIC serves as the membrane source for WIPI2 recruitment and LC3 lipidation, leading to formation of autophagosomes that target cytosolic DNA or DNA viruses for degradation by the lysosome. Promotes autophagy by acting as a proton channel that directs proton efflux from the Golgi to facilitate MAP1LC3B/LC3B lipidation. The autophagy- and interferon-inducing activities can be uncoupled and autophagy induction is independent of TBK1 phosphorylation. Autophagy is also triggered upon infection by bacteria: following c-di-GMP-binding, which is produced by live Gram-positive bacteria, promotes reticulophagy. May be involved in translocon function, the translocon possibly being able to influence the induction of type I interferons. May be involved in transduction of apoptotic signals via its association with the major histocompatibility complex class II (MHC-II). The polypeptide is Stimulator of interferon genes protein (Bos taurus (Bovine)).